Reading from the N-terminus, the 197-residue chain is Recombination protein RecR (197 aa).

The C4-type zinc-finger motif lies at Cys-56–Cys-71. The Toprim domain occupies Thr-79–Pro-174.

The protein belongs to the RecR family.

May play a role in DNA repair. It seems to be involved in an RecBC-independent recombinational process of DNA repair. It may act with RecF and RecO. The protein is Recombination protein RecR of Psychrobacter cryohalolentis (strain ATCC BAA-1226 / DSM 17306 / VKM B-2378 / K5).